The chain runs to 251 residues: MQNNQFPHFSDEVGDRNMHNPYASGSSYDALFPPCAKLPYHGVELQPSAVCPKNFVIFDQTYDRSQVMYHPELTHKLMNTPSLNNLASTFQNEYVGGSYGNYGNYEQEVSSSYQEDPNEIDALLSADEDYEENDDNEGEEDGGDSEEVSTARTSSRDYGNTTAESCCSSYGYNNNNNNNSRKQSLSGSASSSNNDGKGRKKMKKMMGVLRRIVPGGEQMNTACVLDEAVQYLKSLKIEAQKLGVGHFSNQS.

Disordered regions lie at residues 1–20 (MQNN…NMHN), 130–161 (YEEN…YGNT), and 173–202 (NNNN…RKKM). Basic and acidic residues predominate over residues 9–18 (FSDEVGDRNM). The span at 130–147 (YEENDDNEGEEDGGDSEE) shows a compositional bias: acidic residues. Polar residues predominate over residues 148 to 161 (VSTARTSSRDYGNT). Low complexity predominate over residues 173–192 (NNNNNNNSRKQSLSGSASSS). The bHLH domain occupies 186–235 (SGSASSSNNDGKGRKKMKKMMGVLRRIVPGGEQMNTACVLDEAVQYLKSL).

Homodimer. Interacts with LHW.

It localises to the nucleus. This Arabidopsis thaliana (Mouse-ear cress) protein is Transcription factor bHLH144 (BHLH144).